The following is a 490-amino-acid chain: Cytochrome P450 2C38 (490 aa).

The first 20 residues, 1–20 (MDLVTFLVLTLSSLILLSLW), serve as a signal peptide directing secretion. Cys435 is a heme binding site.

It belongs to the cytochrome P450 family. Requires heme as cofactor. As to expression, liver, brain, kidney, and intestine, with trace amounts in lung and heart.

The protein resides in the endoplasmic reticulum membrane. It is found in the microsome membrane. It carries out the reaction an organic molecule + reduced [NADPH--hemoprotein reductase] + O2 = an alcohol + oxidized [NADPH--hemoprotein reductase] + H2O + H(+). The enzyme catalyses (5Z,8Z,11Z,14Z)-eicosatetraenoate + reduced [NADPH--hemoprotein reductase] + O2 = 11,12-epoxy-(5Z,8Z,14Z)-eicosatrienoate + oxidized [NADPH--hemoprotein reductase] + H2O + H(+). The protein operates within lipid metabolism; arachidonate metabolism. Functionally, a cytochrome P450 monooxygenase that primarily catalyzes the epoxidation of 11,12 double bond of (5Z,8Z,11Z,14Z)-eicosatetraenoic acid (arachidonate) forming 11,12-epoxyeicosatrienoic acid (11,12-EET) regioisomer. Mechanistically, uses molecular oxygen inserting one oxygen atom into a substrate, and reducing the second into a water molecule, with two electrons provided by NADPH via cytochrome P450 reductase (CPR; NADPH--hemoprotein reductase). The polypeptide is Cytochrome P450 2C38 (Mus musculus (Mouse)).